We begin with the raw amino-acid sequence, 446 residues long: Tubulin beta-6 chain (446 aa).

The MREI motif motif lies at 1–4 (MREI). GTP contacts are provided by Gln-11, Glu-69, Ser-138, Gly-142, Thr-143, and Gly-144. A Mg(2+)-binding site is contributed by Glu-69. Ser-172 carries the phosphoserine; by CDK1 modification. GTP contacts are provided by Asn-204 and Asn-226. Position 438 is a 5-glutamyl polyglutamate (Glu-438).

The protein belongs to the tubulin family. As to quaternary structure, dimer of alpha and beta chains. A typical microtubule is a hollow water-filled tube with an outer diameter of 25 nm and an inner diameter of 15 nM. Alpha-beta heterodimers associate head-to-tail to form protofilaments running lengthwise along the microtubule wall with the beta-tubulin subunit facing the microtubule plus end conferring a structural polarity. Microtubules usually have 13 protofilaments but different protofilament numbers can be found in some organisms and specialized cells. It depends on Mg(2+) as a cofactor. In terms of processing, some glutamate residues at the C-terminus are polyglutamylated, resulting in polyglutamate chains on the gamma-carboxyl group. Polyglutamylation plays a key role in microtubule severing by spastin (SPAST). SPAST preferentially recognizes and acts on microtubules decorated with short polyglutamate tails: severing activity by SPAST increases as the number of glutamates per tubulin rises from one to eight, but decreases beyond this glutamylation threshold. Glutamylation is also involved in cilia motility. Some glutamate residues at the C-terminus are monoglycylated but not polyglycylated due to the absence of functional TTLL10 in human. Monoglycylation is mainly limited to tubulin incorporated into cilia and flagella axonemes, which is required for their stability and maintenance. Flagella glycylation controls sperm motility. Both polyglutamylation and monoglycylation can coexist on the same protein on adjacent residues, and lowering glycylation levels increases polyglutamylation, and reciprocally. Post-translationally, phosphorylated on Ser-172 by CDK1 during the cell cycle, from metaphase to telophase, but not in interphase. This phosphorylation inhibits tubulin incorporation into microtubules. In terms of tissue distribution, ubiquitous. Maximal expression in breast and lung, where it represents around 10% of all beta-tubulins. Largely decreased expression in most cancerous tissues.

It localises to the cytoplasm. Its subcellular location is the cytoskeleton. Functionally, tubulin is the major constituent of microtubules, a cylinder consisting of laterally associated linear protofilaments composed of alpha- and beta-tubulin heterodimers. Microtubules grow by the addition of GTP-tubulin dimers to the microtubule end, where a stabilizing cap forms. Below the cap, tubulin dimers are in GDP-bound state, owing to GTPase activity of alpha-tubulin. The protein is Tubulin beta-6 chain (TUBB6) of Homo sapiens (Human).